Consider the following 403-residue polypeptide: 8-amino-7-oxononanoate synthase (403 aa).

Residue Arg22 coordinates substrate. A pyridoxal 5'-phosphate-binding site is contributed by 109–110 (GF). A substrate-binding site is contributed by His134. The pyridoxal 5'-phosphate site is built by Ser178, His206, and Thr232. An N6-(pyridoxal phosphate)lysine modification is found at Lys235. Position 348 (Thr348) interacts with substrate. A disordered region spans residues 383–403 (SNDSGSKPSIESSFELKKEAQ). Over residues 385-394 (DSGSKPSIES) the composition is skewed to polar residues.

Belongs to the class-II pyridoxal-phosphate-dependent aminotransferase family. BioF subfamily. As to quaternary structure, homodimer. It depends on pyridoxal 5'-phosphate as a cofactor.

It catalyses the reaction 6-carboxyhexanoyl-[ACP] + L-alanine + H(+) = (8S)-8-amino-7-oxononanoate + holo-[ACP] + CO2. It functions in the pathway cofactor biosynthesis; biotin biosynthesis. Its function is as follows. Catalyzes the decarboxylative condensation of pimeloyl-[acyl-carrier protein] and L-alanine to produce 8-amino-7-oxononanoate (AON), [acyl-carrier protein], and carbon dioxide. The polypeptide is 8-amino-7-oxononanoate synthase (Vibrio atlanticus (strain LGP32) (Vibrio splendidus (strain Mel32))).